The primary structure comprises 111 residues: Cytochrome c oxidase subunit 6A1, mitochondrial (111 aa).

Residues 1-26 (MASAVLSASRVSRPLGRALPGLRRPM) constitute a mitochondrion transit peptide. The Mitochondrial matrix portion of the chain corresponds to 27-36 (SSGAHGEEGS). Residues 37-61 (ARMWKALTYFVALPGVGVSMLNVFL) form a helical membrane-spanning segment. At 62–111 (KSRHEEHERPPFVAYPHLRIRTKPFPWGDGNHTLFHNPHVNPLPTGYEDE) the chain is on the mitochondrial intermembrane side.

This sequence belongs to the cytochrome c oxidase subunit 6A family. Component of the cytochrome c oxidase (complex IV, CIV), a multisubunit enzyme composed of 14 subunits. The complex is composed of a catalytic core of 3 subunits MT-CO1, MT-CO2 and MT-CO3, encoded in the mitochondrial DNA, and 11 supernumerary subunits COX4I, COX5A, COX5B, COX6A, COX6B, COX6C, COX7A, COX7B, COX7C, COX8 and NDUFA4, which are encoded in the nuclear genome. The complex exists as a monomer or a dimer and forms supercomplexes (SCs) in the inner mitochondrial membrane with NADH-ubiquinone oxidoreductase (complex I, CI) and ubiquinol-cytochrome c oxidoreductase (cytochrome b-c1 complex, complex III, CIII), resulting in different assemblies (supercomplex SCI(1)III(2)IV(1) and megacomplex MCI(2)III(2)IV(2)).

It is found in the mitochondrion inner membrane. It functions in the pathway energy metabolism; oxidative phosphorylation. In terms of biological role, component of the cytochrome c oxidase, the last enzyme in the mitochondrial electron transport chain which drives oxidative phosphorylation. The respiratory chain contains 3 multisubunit complexes succinate dehydrogenase (complex II, CII), ubiquinol-cytochrome c oxidoreductase (cytochrome b-c1 complex, complex III, CIII) and cytochrome c oxidase (complex IV, CIV), that cooperate to transfer electrons derived from NADH and succinate to molecular oxygen, creating an electrochemical gradient over the inner membrane that drives transmembrane transport and the ATP synthase. Cytochrome c oxidase is the component of the respiratory chain that catalyzes the reduction of oxygen to water. Electrons originating from reduced cytochrome c in the intermembrane space (IMS) are transferred via the dinuclear copper A center (CU(A)) of subunit 2 and heme A of subunit 1 to the active site in subunit 1, a binuclear center (BNC) formed by heme A3 and copper B (CU(B)). The BNC reduces molecular oxygen to 2 water molecules unsing 4 electrons from cytochrome c in the IMS and 4 protons from the mitochondrial matrix. This chain is Cytochrome c oxidase subunit 6A1, mitochondrial (Cox6a1), found in Mus musculus (Mouse).